The chain runs to 1018 residues: MLPAKYSPKDVESEIFKFWEDNDIYRKVKEKGGRKFYFVDGPPYTTGRIHLGTAWNKVLKDTILRYKRMMGFAPTDTPGWDMHGLPIEVKVEQELGFRTKRDIESFGIDKFIERCMNYALANKDAMTEQFKSLAVWMDWENPYMTIKAEYMNAAWFAIKRAHERGLLERKKMVVNWCHRCETALADAEVEYWDEEDPSIYVKFPVKGEKDTYIVIWTTTPWTLPANMAVAVHPSLEYAKFRAVKDGKVEYLILAKELADSVLGKGDYDSWEVVETYLGEDLEGLEYEHPLADEVPLQKNWKHQVFFADFVTAENTGCVHIAPGHGVEDYELGVEKGLEVFNPVDDRGVYTEEAGKYAGKHVKEANDDIIDDLYRKDLLLAEERIVHRYGHCWRCKTPIIYRATEQWFIKISELKDEMLEEIDKVMWIPEWAGSARFKDWVSNAKDWCISRQRYWGIPIPVWICEKCGEMKVVGSINEIEWENDLDLHRPKIDAVTFSCQCGGVMRRVPDVFDVWFDSGVASWGSIAYPLRKDKFEELWPADFITEGHDQTRGWFYSQLGTSVVCFDKAPYKAVLMHGFTLDEQGRKMSKSLGNVVEPEEVVGQIGVDGFRLYVLYSAPWEDLRFSWEEARNINRMLNVVWNAVRFAHTYMSLDNYSFGEKGELKIEDRWILSRLESFIKEANEAMEGYQVHRVVRAFFDFFVEDFSRWYIQIIRPRVWEERDSPSKLAAYYTMFRVIDRSLRAIAPFAPLIAEWFYQHVVKEFREGEESIFMEEYSTAEVEMIDGELEAAMKVAKEIVEAAANARNKAKRKLRWPLRELVIESGSEKVRKAVEMLEETILSQCNVKQVRVVDSFEKEIEIKPNYKYIGPLLKEKAGEFAKYVASLKEIPEKLVFDGVELDPKQAIVVDYRLPEGYEYAEFSGGVVYIYKELDDELVREAFAREVIRRIQEMRKELDLDVEEFIETTVEMDAELVKGWEDYIKSETRSQKLVFGKAEGYVREWNIEGKKVKIGIKRLRG.

The short motif at 43–53 (PYTTGRIHLGT) is the 'HIGH' region element. The 'KMSKS' region signature appears at 586–590 (KMSKS). K589 is a binding site for ATP.

This sequence belongs to the class-I aminoacyl-tRNA synthetase family. IleS type 2 subfamily. In terms of assembly, monomer. It depends on Zn(2+) as a cofactor.

It is found in the cytoplasm. It carries out the reaction tRNA(Ile) + L-isoleucine + ATP = L-isoleucyl-tRNA(Ile) + AMP + diphosphate. Functionally, catalyzes the attachment of isoleucine to tRNA(Ile). As IleRS can inadvertently accommodate and process structurally similar amino acids such as valine, to avoid such errors it has two additional distinct tRNA(Ile)-dependent editing activities. One activity is designated as 'pretransfer' editing and involves the hydrolysis of activated Val-AMP. The other activity is designated 'posttransfer' editing and involves deacylation of mischarged Val-tRNA(Ile). The chain is Isoleucine--tRNA ligase from Archaeoglobus fulgidus (strain ATCC 49558 / DSM 4304 / JCM 9628 / NBRC 100126 / VC-16).